The sequence spans 336 residues: Phosphoribosylformylglycinamidine cyclo-ligase (336 aa).

This sequence belongs to the AIR synthase family.

The protein resides in the cytoplasm. It catalyses the reaction 2-formamido-N(1)-(5-O-phospho-beta-D-ribosyl)acetamidine + ATP = 5-amino-1-(5-phospho-beta-D-ribosyl)imidazole + ADP + phosphate + H(+). The protein operates within purine metabolism; IMP biosynthesis via de novo pathway; 5-amino-1-(5-phospho-D-ribosyl)imidazole from N(2)-formyl-N(1)-(5-phospho-D-ribosyl)glycinamide: step 2/2. This is Phosphoribosylformylglycinamidine cyclo-ligase from Thermoanaerobacter pseudethanolicus (strain ATCC 33223 / 39E) (Clostridium thermohydrosulfuricum).